The sequence spans 136 residues: Protein NrdI (136 aa).

This sequence belongs to the NrdI family.

Its function is as follows. Probably involved in ribonucleotide reductase function. This chain is Protein NrdI, found in Klebsiella pneumoniae (strain 342).